The chain runs to 293 residues: MNKDLKGLYAALLVPFDENGQVNEQGLKQIAQNAIETEELDGLYVNGSSGENFLLNTEQKKQVFKVAKEAVGDKVKLIAQVGSLDLNEAIELGKYATELGYDALSAVTPFYYPFTFEEIRDYYFDIIEATQNNMIIYAIPDLTGVNISIEQFSELFNHEKIVGVKYTAPNFFLLERIRKAFPDKLILSGFDEMLVQATISGVDGAIGSTYNVNGRRARKIFDLARQGQIQEAYQLQHDSNDIIETVLSMGIYPTLKEILRHRDIDAGLPKRPFKPFNEAHRQTLDQLIAKYDL.

2 residues coordinate aceneuramate: serine 48 and serine 49. Residue tyrosine 137 is the Proton donor of the active site. The active-site Schiff-base intermediate with substrate is the lysine 165. Positions 167, 189, 191, 192, and 208 each coordinate aceneuramate.

The protein belongs to the DapA family. NanA subfamily. As to quaternary structure, homotetramer.

It localises to the cytoplasm. It carries out the reaction aceneuramate = aldehydo-N-acetyl-D-mannosamine + pyruvate. It participates in amino-sugar metabolism; N-acetylneuraminate degradation; D-fructose 6-phosphate from N-acetylneuraminate: step 1/5. Catalyzes the reversible aldol cleavage of N-acetylneuraminic acid (sialic acid; Neu5Ac) to form pyruvate and N-acetylmannosamine (ManNAc) via a Schiff base intermediate. The chain is N-acetylneuraminate lyase from Staphylococcus aureus (strain Mu3 / ATCC 700698).